We begin with the raw amino-acid sequence, 469 residues long: Mitochondrial-processing peptidase subunit beta (469 aa).

Histidine 78 lines the Zn(2+) pocket. The Proton acceptor role is filled by glutamate 81. Residues histidine 82 and glutamate 159 each coordinate Zn(2+).

Belongs to the peptidase M16 family. As to quaternary structure, heterodimer of alpha and beta subunits, forming the mitochondrial processing protease (MPP) in which subunit alpha is involved in substrate recognition and binding and subunit beta is the catalytic subunit. mppB is probably also part of the cytochrome bc1 complex as a core I protein in the mitochondrial inner membrane. It depends on Zn(2+) as a cofactor.

The protein localises to the mitochondrion inner membrane. Its subcellular location is the mitochondrion matrix. The enzyme catalyses Release of N-terminal transit peptides from precursor proteins imported into the mitochondrion, typically with Arg in position P2.. Binding to alpha subunit is required for catalytic activity. Functionally, catalytic subunit of the essential mitochondrial processing protease (MPP), which cleaves the mitochondrial sequence off newly imported precursors proteins. Preferentially, cleaves after an arginine at position P2. Plays an essential role in mitochondrial biogenesis. This Dictyostelium discoideum (Social amoeba) protein is Mitochondrial-processing peptidase subunit beta (mppB).